Here is a 234-residue protein sequence, read N- to C-terminus: Phosphoribosylaminoimidazole-succinocarboxamide synthase (234 aa).

The protein belongs to the SAICAR synthetase family.

The catalysed reaction is 5-amino-1-(5-phospho-D-ribosyl)imidazole-4-carboxylate + L-aspartate + ATP = (2S)-2-[5-amino-1-(5-phospho-beta-D-ribosyl)imidazole-4-carboxamido]succinate + ADP + phosphate + 2 H(+). The protein operates within purine metabolism; IMP biosynthesis via de novo pathway; 5-amino-1-(5-phospho-D-ribosyl)imidazole-4-carboxamide from 5-amino-1-(5-phospho-D-ribosyl)imidazole-4-carboxylate: step 1/2. The sequence is that of Phosphoribosylaminoimidazole-succinocarboxamide synthase from Clostridium botulinum (strain Okra / Type B1).